The primary structure comprises 611 residues: Brain-enriched guanylate kinase-associated protein (611 aa).

At Tyr156 the chain carries Phosphotyrosine. Phosphoserine occurs at positions 219, 248, and 265. Thr268 carries the phosphothreonine modification. A phosphoserine mark is found at Ser284, Ser364, and Ser391. Arg399 carries the asymmetric dimethylarginine modification. Residues Ser474, Ser484, Ser494, Ser496, Ser519, Ser521, and Ser525 each carry the phosphoserine modification. The interval 520–611 (LSPSRSADPL…KAQLYGTLLN (92 aa)) is disordered. Over residues 554 to 563 (EPEHGSRDSL) the composition is skewed to basic and acidic residues. Phosphoserine occurs at positions 571 and 581.

In terms of assembly, interacts with DLG4 and DLGAP1 and forms a ternary complex. Brain-specific. Expressed in neurons and rather enriched at synaptic junctions.

It is found in the cytoplasm. The protein localises to the membrane. May sustain the structure of the postsynaptic density (PSD). In Rattus norvegicus (Rat), this protein is Brain-enriched guanylate kinase-associated protein (Begain).